We begin with the raw amino-acid sequence, 408 residues long: Aminoacylase-1A (408 aa).

Residue histidine 80 participates in Zn(2+) binding. The active site involves aspartate 82. Aspartate 113 is a binding site for Zn(2+). The active-site Proton acceptor is glutamate 147. 3 residues coordinate Zn(2+): glutamate 148, glutamate 175, and histidine 373. Serine 408 is subject to Phosphoserine.

This sequence belongs to the peptidase M20A family. Homodimer. It depends on Zn(2+) as a cofactor. The N-terminus is blocked.

The protein localises to the cytoplasm. The enzyme catalyses an N-acyl-L-amino acid + H2O = an L-alpha-amino acid + a carboxylate. It carries out the reaction an N-acetyl-L-cysteine-S-conjugate + H2O = an S-substituted L-cysteine + acetate. Involved in the hydrolysis of N-acylated or N-acetylated amino acids (except L-aspartate). The protein is Aminoacylase-1A (Acy1a) of Rattus norvegicus (Rat).